A 244-amino-acid chain; its full sequence is Phosphoadenosine 5'-phosphosulfate reductase (244 aa).

The active-site Nucleophile; cysteine thiosulfonate intermediate is the cysteine 239.

It belongs to the PAPS reductase family. CysH subfamily.

The protein resides in the cytoplasm. It catalyses the reaction [thioredoxin]-disulfide + sulfite + adenosine 3',5'-bisphosphate + 2 H(+) = [thioredoxin]-dithiol + 3'-phosphoadenylyl sulfate. It functions in the pathway sulfur metabolism; hydrogen sulfide biosynthesis; sulfite from sulfate: step 3/3. Its function is as follows. Catalyzes the formation of sulfite from phosphoadenosine 5'-phosphosulfate (PAPS) using thioredoxin as an electron donor. This Serratia proteamaculans (strain 568) protein is Phosphoadenosine 5'-phosphosulfate reductase.